The sequence spans 89 residues: DNA/RNA-binding protein Alba (89 aa).

N6-acetyllysine is present on K11.

Belongs to the histone-like Alba family. Acetylated. Acetylation at Lys-11 decreases DNA-binding affinity.

It localises to the cytoplasm. Its subcellular location is the chromosome. Its function is as follows. Binds double-stranded DNA tightly but without sequence specificity. Involved in DNA compaction. The protein is DNA/RNA-binding protein Alba of Thermoplasma volcanium (strain ATCC 51530 / DSM 4299 / JCM 9571 / NBRC 15438 / GSS1).